The sequence spans 195 residues: MSEIKLIVGLANPGAEYAHTRHNAGAWYVLELARICGVTLVADSKYFGLTARAVLHGKDVRLLIPTTYMNLSGKAVGALANFFRITPEEILVAHDELDLPPGVAKFKLGGGHGGHNGLKDIIAKLANDKNFYRLRLGIGHPGDKNQVSGYVLGKAPAKEQELIDAAIDEAVRSTEILFKQDMVKAMNRLHSFKAE.

Tyrosine 17 provides a ligand contact to tRNA. The Proton acceptor role is filled by histidine 22. TRNA contacts are provided by tyrosine 68, asparagine 70, and asparagine 116.

This sequence belongs to the PTH family. Monomer.

The protein localises to the cytoplasm. It carries out the reaction an N-acyl-L-alpha-aminoacyl-tRNA + H2O = an N-acyl-L-amino acid + a tRNA + H(+). Its function is as follows. Hydrolyzes ribosome-free peptidyl-tRNAs (with 1 or more amino acids incorporated), which drop off the ribosome during protein synthesis, or as a result of ribosome stalling. Functionally, catalyzes the release of premature peptidyl moieties from peptidyl-tRNA molecules trapped in stalled 50S ribosomal subunits, and thus maintains levels of free tRNAs and 50S ribosomes. This is Peptidyl-tRNA hydrolase from Shewanella baltica (strain OS155 / ATCC BAA-1091).